We begin with the raw amino-acid sequence, 365 residues long: Caffeic acid 3-O-methyltransferase 1 (365 aa).

130 to 136 provides a ligand contact to substrate; that stretch reads MNQDKVL. Residues 162 to 180 are substrate binding; the sequence is AFEYHGTDPRFNKVFNKGM. Positions 208, 231, 251, 252, and 265 each coordinate S-adenosyl-L-methionine. Residue histidine 269 is the Proton acceptor of the active site.

It belongs to the class I-like SAM-binding methyltransferase superfamily. Cation-independent O-methyltransferase family. COMT subfamily. As to quaternary structure, homodimer. The N-terminus is blocked. As to expression, xylem.

The enzyme catalyses (E)-caffeate + S-adenosyl-L-methionine = (E)-ferulate + S-adenosyl-L-homocysteine + H(+). It participates in aromatic compound metabolism; phenylpropanoid biosynthesis. Catalyzes the conversion of caffeic acid to ferulic acid and of 5-hydroxyferulic acid to sinapic acid. The resulting products may subsequently be converted to the corresponding alcohols that are incorporated into lignins. In Populus tremuloides (Quaking aspen), this protein is Caffeic acid 3-O-methyltransferase 1 (OMT1).